We begin with the raw amino-acid sequence, 383 residues long: Alkanesulfonate monooxygenase (383 aa).

This sequence belongs to the SsuD family. Homotetramer.

The catalysed reaction is an alkanesulfonate + FMNH2 + O2 = an aldehyde + FMN + sulfite + H2O + 2 H(+). Catalyzes the desulfonation of aliphatic sulfonates. This chain is Alkanesulfonate monooxygenase, found in Erwinia pyrifoliae (strain DSM 12163 / CIP 106111 / Ep16/96).